Here is a 279-residue protein sequence, read N- to C-terminus: NADPH-dependent 7-cyano-7-deazaguanine reductase (279 aa).

86 to 88 (IES) provides a ligand contact to substrate. 88 to 89 (SK) provides a ligand contact to NADPH. C187 (thioimide intermediate) is an active-site residue. D194 functions as the Proton donor in the catalytic mechanism. 226–227 (HE) contacts substrate. 255 to 256 (RG) provides a ligand contact to NADPH.

It belongs to the GTP cyclohydrolase I family. QueF type 2 subfamily. Homodimer.

Its subcellular location is the cytoplasm. The enzyme catalyses 7-aminomethyl-7-carbaguanine + 2 NADP(+) = 7-cyano-7-deazaguanine + 2 NADPH + 3 H(+). It participates in tRNA modification; tRNA-queuosine biosynthesis. Its function is as follows. Catalyzes the NADPH-dependent reduction of 7-cyano-7-deazaguanine (preQ0) to 7-aminomethyl-7-deazaguanine (preQ1). In Actinobacillus pleuropneumoniae serotype 3 (strain JL03), this protein is NADPH-dependent 7-cyano-7-deazaguanine reductase.